Here is a 271-residue protein sequence, read N- to C-terminus: Formamidopyrimidine-DNA glycosylase (271 aa).

Pro-2 acts as the Schiff-base intermediate with DNA in catalysis. Catalysis depends on Glu-3, which acts as the Proton donor. Lys-58 functions as the Proton donor; for beta-elimination activity in the catalytic mechanism. Positions 91, 110, and 152 each coordinate DNA. Residues Arg-237–Arg-271 form an FPG-type zinc finger. The active-site Proton donor; for delta-elimination activity is Arg-261.

The protein belongs to the FPG family. Monomer. It depends on Zn(2+) as a cofactor.

It catalyses the reaction Hydrolysis of DNA containing ring-opened 7-methylguanine residues, releasing 2,6-diamino-4-hydroxy-5-(N-methyl)formamidopyrimidine.. The enzyme catalyses 2'-deoxyribonucleotide-(2'-deoxyribose 5'-phosphate)-2'-deoxyribonucleotide-DNA = a 3'-end 2'-deoxyribonucleotide-(2,3-dehydro-2,3-deoxyribose 5'-phosphate)-DNA + a 5'-end 5'-phospho-2'-deoxyribonucleoside-DNA + H(+). Functionally, involved in base excision repair of DNA damaged by oxidation or by mutagenic agents. Acts as a DNA glycosylase that recognizes and removes damaged bases. Has a preference for oxidized purines, such as 7,8-dihydro-8-oxoguanine (8-oxoG). Has AP (apurinic/apyrimidinic) lyase activity and introduces nicks in the DNA strand. Cleaves the DNA backbone by beta-delta elimination to generate a single-strand break at the site of the removed base with both 3'- and 5'-phosphates. The protein is Formamidopyrimidine-DNA glycosylase of Thioalkalivibrio sulfidiphilus (strain HL-EbGR7).